The sequence spans 413 residues: ORC1-type DNA replication protein 2 (413 aa).

ATP is bound by residues 70–74 (TGKTA), Tyr217, and Arg229.

It belongs to the CDC6/cdc18 family. As to quaternary structure, monomer. Interacts with Cdc6-3, MCM and PolB1. In terms of processing, autophosphorylated in vitro.

Its function is as follows. Involved in regulation of DNA replication. May play essential roles in origin recognition and cell cycle control of replication. Binds both single-stranded and double-stranded DNA, with a preference for molecules that contain a bubble, a fork, or a tail. Has a weak ATPase activity. Stimulates the binding of the MCM helicase to the origin DNA, but strongly inhibits ATPase and DNA helicase activities of MCM. Also regulates the DNA polymerase and the nuclease activities of PolB1. In Saccharolobus solfataricus (strain ATCC 35092 / DSM 1617 / JCM 11322 / P2) (Sulfolobus solfataricus), this protein is ORC1-type DNA replication protein 2 (cdc6-2).